Reading from the N-terminus, the 430-residue chain is Synaptotagmin-11 (430 aa).

Residues 1–15 (MAEITNIRPSFDVSP) lie on the Vesicular side of the membrane. A helical membrane pass occupies residues 16–36 (VAAGLIGASVLVVCVSVTVFV). The Cytoplasmic segment spans residues 37–430 (WTCCHQQAEK…IAKWHSLSEY (394 aa)). The span at 79–90 (RRDKDGPRRESG) shows a compositional bias: basic and acidic residues. Disordered stretches follow at residues 79-120 (RRDK…CMDQ) and 132-152 (RSPM…SSPE). Residue S133 is modified to Phosphoserine. Over residues 134 to 150 (PMTSLTPGESKATSPSS) the composition is skewed to polar residues. C2 domains lie at 156-278 (MLGS…QLTR) and 290-425 (SRGE…AKWH). Residues D249, S252, and D255 each coordinate Ca(2+).

Belongs to the synaptotagmin family. In terms of assembly, homodimer. Can also form heterodimers. Interacts with PRKN. Interacts (via C2 2 domain) with AGO2 and SND1; the interaction with SND1 is direct. Interacts with KIF1A; the interaction increases in presence of calcium. Requires Ca(2+) as cofactor. Ubiquitinated, at least by PRKN, and targeted to the proteasome complex for degradation. Ubiquitination is inhibited by ATP13A2. In terms of tissue distribution, expressed in cerebellun, cerebellar cortex, hippocampus, olfactory bulb and spinal cord (at protein level). Expressed by neurons, astrocytes and microglia (at protein level). Expressed in macrophages (at protein level).

The protein localises to the cytoplasmic vesicle membrane. It is found in the perikaryon. The protein resides in the golgi apparatus. Its subcellular location is the trans-Golgi network membrane. It localises to the recycling endosome membrane. The protein localises to the lysosome membrane. It is found in the cytoplasmic vesicle. The protein resides in the phagosome. Its subcellular location is the cell projection. It localises to the axon. The protein localises to the dendrite. It is found in the postsynaptic density. The protein resides in the clathrin-coated vesicle membrane. Its function is as follows. Synaptotagmin family member involved in vesicular and membrane trafficking which does not bind Ca(2+). Inhibits clathrin-mediated and bulk endocytosis, functions to ensure precision in vesicle retrieval. Plays an important role in dopamine transmission by regulating endocytosis and the vesicle-recycling process. Essential component of a neuronal vesicular trafficking pathway that differs from the synaptic vesicle trafficking pathway but is crucial for development and synaptic plasticity. In macrophages and microglia, inhibits the conventional cytokine secretion, of at least IL6 and TNF, and phagocytosis. In astrocytes, regulates lysosome exocytosis, mechanism required for the repair of injured astrocyte cell membrane. Required for the ATP13A2-mediated regulation of the autophagy-lysosome pathway. The sequence is that of Synaptotagmin-11 from Mus musculus (Mouse).